Here is a 462-residue protein sequence, read N- to C-terminus: MANRIEADNLFELTAELVSASAKLHKFLDQKNLPQPSFDAPAPSVALNTANKPYYDARSAIVEAAEQLIRLVRGPRDTLLALSFEHCATASMQVVFKYKFANHIPLHGSTTYSKIAEAVGDGVTTALVERTIQHCASFGLFETIPGGYVTHNATSSLLVTDPDLEAWMYLSAVIAYPAGAAIPKAVEQYGVSSEATEAGYGVSIGRKIAQFQRFREPDGKKDHEMFARAMRGIAAGGAYDFRHAVDGGYPWHLLTEGAGHLVVDVGGGPGHVAMALAEKYPSLRFQVQDLPETVQVGAKNCPEHLRKHVTFVAHDFMTPQPAHEVQDGEGIVYFARFILHDWSDKYATKIVQALATGLRPQDRIILNEVVVPEAGQVGRETERRMHDRDLLMLMNLNGRERTQSAFEAIFASVTPKLRLQRVIHPEQGELSLIEVTLDGVELPAQANGVNGHANGTNGVNGH.

Aspartate 289 contributes to the S-adenosyl-L-methionine binding site. Residue histidine 340 is the Proton acceptor of the active site.

It belongs to the class I-like SAM-binding methyltransferase superfamily. Cation-independent O-methyltransferase family. COMT subfamily.

It participates in mycotoxin biosynthesis. In terms of biological role, O-methyltransferase; part of the gene cluster that mediates the biosynthesis of cercosporin, a light-activated, non-host-selective toxin. The perylenequinone chromophore of cercosporin absorbs light energy to attain an electronically-activated triplet state and produces active oxygen species such as the hydroxyl radical, superoxide, hydrogen peroxide or singlet oxygen upon reaction with oxygen molecules. These reactive oxygen species cause damage to various cellular components including lipids, proteins and nucleic acids. The first step of cercosporin biosynthesis is performed by the polyketide synthase CTB1 which catalyzes the formation of nor-toralactone. The starter unit acyltransferase (SAT) domain of CTB1 initiates polyketide extension by the selective utilization of acetyl-CoA, which is elongated to the heptaketide in the beta-ketoacyl synthase (KS) domain by successive condensations with six malonyl units introduced by the malonyl acyltransferase (MAT) domain. The product template (PT) domain catalyzes C4-C9 and C2-C11 aldol cyclizations and dehydrations to a trihydroxynaphthalene, which is thought to be delivered to the thioesterase (TE) domain for product release. The bifunctional enzyme CTB3 then methylates nor-toralactone to toralactone before conducting an unusual oxidative aromatic ring opening. The O-methyltransferase CTB2 further methylates the nascent OH-6 of the CBT3 product, blocking further oxidation at this site before the reductase CTB6 reduces the 2-oxopropyl ketone at position C7, giving naphthalene. The FAD-dependent monooxygenase CTB5 in concert with the multicopper oxidase CTB12 are responsible for homodimerization of naphthalene with CTB7 installing the dioxepine moiety, finally producing cercosporin. The fasciclin domain-containing protein CTB11 might act with CTB5 and CTB12 whereas the roles of CTB9 and CTB10 have still to be elucidated. This Cercospora beticola (Sugarbeet leaf spot fungus) protein is O-methyltransferase CTB2.